A 252-amino-acid chain; its full sequence is Beta-carotene isomerase D27, chloroplastic (252 aa).

A chloroplast-targeting transit peptide spans 1–43 (MDSKMIAHNMSLTPTLAQWKKLRLKPKHTFVVGVLARPTDDIS).

Fe cation is required as a cofactor. In terms of tissue distribution, highly expressed in roots. Expressed at low levels in leaves and stems.

It localises to the plastid. The protein resides in the chloroplast. It carries out the reaction all-trans-beta-carotene = 9-cis-beta-carotene. Its function is as follows. Involved in strigolactones biosynthesis by catalyzing the isomerization of the C9-C10 double bond in all-trans-beta-carotene leading to 9-cis-beta-carotene and providing the substrate for CCD7. Strigolactones are hormones that inhibit tillering and shoot branching through the MAX-dependent pathway, contribute to the regulation of shoot architectural response to phosphate-limiting conditions and function as rhizosphere signals that stimulate hyphal branching of arbuscular mycorrhizal fungi and trigger seed germination of root parasitic weeds. The chain is Beta-carotene isomerase D27, chloroplastic from Medicago truncatula (Barrel medic).